The sequence spans 106 residues: uncharacterized protein (106 aa).

Transmembrane regions (helical) follow at residues 4 to 24 (LPVVIISIVLFFVLFFGIGFL), 27 to 47 (MLLRMSWIMAVIYPIVCLFII), and 78 to 98 (VLILVSGLAGAIVSGIAINML).

The protein resides in the cell membrane. This is an uncharacterized protein from Bacillus subtilis (strain 168).